We begin with the raw amino-acid sequence, 621 residues long: DNA mismatch repair protein MutL (621 aa).

Belongs to the DNA mismatch repair MutL/HexB family.

Its function is as follows. This protein is involved in the repair of mismatches in DNA. It is required for dam-dependent methyl-directed DNA mismatch repair. May act as a 'molecular matchmaker', a protein that promotes the formation of a stable complex between two or more DNA-binding proteins in an ATP-dependent manner without itself being part of a final effector complex. This is DNA mismatch repair protein MutL from Petrotoga mobilis (strain DSM 10674 / SJ95).